The sequence spans 207 residues: GTP-binding protein Rheb homolog 1 (207 aa).

Residues G25, K26, S27, Y42, T45, N126, D129, and A157 each coordinate GTP. Mg(2+) is bound at residue S27. The Effector region signature appears at Y42–H50. T45 is a binding site for Mg(2+). Residues N180–K193 show a composition bias toward polar residues. The disordered stretch occupies residues N180–S207. The span at P196–S207 shows a compositional bias: basic and acidic residues. C204 carries the cysteine methyl ester modification. A lipid anchor (S-farnesyl cysteine) is attached at C204. A propeptide spans S205 to S207 (removed in mature form).

It belongs to the small GTPase superfamily. Rheb family.

It is found in the cell membrane. It catalyses the reaction GTP + H2O = GDP + phosphate + H(+). Functionally, binds GTP and exhibits intrinsic GTPase activity. The sequence is that of GTP-binding protein Rheb homolog 1 (rheb-1) from Caenorhabditis elegans.